Reading from the N-terminus, the 322-residue chain is MAVFTPVTLDDLSQWITQFDLGKALAIKGIPSGIENTNFFITTEFGEYVLTIFENLSFEQLPFYLNLMRHLAERGVLVPAPIATHQGNLINALHGKPAAIVSKLEGSSQMEPQAVHCAAVGAMLARMHIAAENFPIRQPNLRGLAWRNETAPIVMPYLSDSNKQLLAEEMAFQNAFAESDTYHQLQNGPIHADLFRNNVMFSGDHLTGFFDFYFAGCDTWLFDVAVTVNDWCIDVETGVLDQERVRAMLDAYHHVRPFTAAEQAAWQTMLRAGALRFWLSRLYDFHLPRDAEMLTPHDPGHFERILRLRIEQATPPLFTSAG.

This sequence belongs to the pseudomonas-type ThrB family.

It catalyses the reaction L-homoserine + ATP = O-phospho-L-homoserine + ADP + H(+). The protein operates within amino-acid biosynthesis; L-threonine biosynthesis; L-threonine from L-aspartate: step 4/5. This chain is Homoserine kinase, found in Janthinobacterium sp. (strain Marseille) (Minibacterium massiliensis).